Here is a 293-residue protein sequence, read N- to C-terminus: Ribosomal protein L11 methyltransferase (293 aa).

The S-adenosyl-L-methionine site is built by threonine 145, glycine 166, aspartate 188, and asparagine 230.

It belongs to the methyltransferase superfamily. PrmA family.

Its subcellular location is the cytoplasm. The catalysed reaction is L-lysyl-[protein] + 3 S-adenosyl-L-methionine = N(6),N(6),N(6)-trimethyl-L-lysyl-[protein] + 3 S-adenosyl-L-homocysteine + 3 H(+). Functionally, methylates ribosomal protein L11. This Escherichia coli O8 (strain IAI1) protein is Ribosomal protein L11 methyltransferase.